The sequence spans 58 residues: Large ribosomal subunit protein bL32 (58 aa).

Belongs to the bacterial ribosomal protein bL32 family.

The sequence is that of Large ribosomal subunit protein bL32 from Limosilactobacillus fermentum (strain NBRC 3956 / LMG 18251) (Lactobacillus fermentum).